Here is a 327-residue protein sequence, read N- to C-terminus: Protein-L-isoaspartate O-methyltransferase (327 aa).

2 disordered regions span residues 1-38 (MSGE…DAAR) and 62-105 (PRAA…KSAT). Over residues 14 to 29 (EDLKREPRKPEGRAAE) the composition is skewed to basic and acidic residues. The segment covering 62 to 77 (PRAAGASGSGVPVAKP) has biased composition (low complexity). Positions 92-105 (APSSGVKNGDKSAT) are enriched in polar residues. Ser-175 is a catalytic residue.

Belongs to the methyltransferase superfamily. L-isoaspartyl/D-aspartyl protein methyltransferase family.

It localises to the cytoplasm. It catalyses the reaction [protein]-L-isoaspartate + S-adenosyl-L-methionine = [protein]-L-isoaspartate alpha-methyl ester + S-adenosyl-L-homocysteine. Catalyzes the methyl esterification of L-isoaspartyl residues in peptides and proteins that result from spontaneous decomposition of normal L-aspartyl and L-asparaginyl residues. It plays a role in the repair and/or degradation of damaged proteins. The polypeptide is Protein-L-isoaspartate O-methyltransferase (Burkholderia thailandensis (strain ATCC 700388 / DSM 13276 / CCUG 48851 / CIP 106301 / E264)).